The sequence spans 196 residues: Ribose 1,5-bisphosphate phosphokinase PhnN (196 aa).

The protein belongs to the ribose 1,5-bisphosphokinase family.

It carries out the reaction alpha-D-ribose 1,5-bisphosphate + ATP = 5-phospho-alpha-D-ribose 1-diphosphate + ADP. The protein operates within metabolic intermediate biosynthesis; 5-phospho-alpha-D-ribose 1-diphosphate biosynthesis; 5-phospho-alpha-D-ribose 1-diphosphate from D-ribose 5-phosphate (route II): step 3/3. Functionally, catalyzes the phosphorylation of ribose 1,5-bisphosphate to 5-phospho-D-ribosyl alpha-1-diphosphate (PRPP). The chain is Ribose 1,5-bisphosphate phosphokinase PhnN from Psychromonas ingrahamii (strain DSM 17664 / CCUG 51855 / 37).